A 495-amino-acid polypeptide reads, in one-letter code: Probable biotin-dependent acyl-coenzyme A carboxylase beta3 subunit (495 aa).

The CoA carboxyltransferase N-terminal domain occupies 1–236; sequence MSRITTDQLR…PLPAPQTPAP (236 aa). The CoA carboxyltransferase C-terminal domain occupies 242–470; the sequence is TWDSVVASRR…SNAIAAEVHA (229 aa).

Belongs to the AccD/PCCB family. In terms of assembly, the biotin-dependent acyl-CoA carboxylase complex is composed of an AccA protein, which contains the biotin carboxylase (BC) and biotin carboxyl carrier protein (BCCP) domains, and an AccD protein, which contains the carboxyl transferase (CT) domain.

Its function is as follows. Component of a biotin-dependent acyl-CoA carboxylase complex. This subunit transfers the CO2 from carboxybiotin to the CoA ester substrate. This is Probable biotin-dependent acyl-coenzyme A carboxylase beta3 subunit (accD3) from Mycobacterium bovis (strain ATCC BAA-935 / AF2122/97).